Consider the following 482-residue polypeptide: Bile acid receptor (482 aa).

A Glycyl lysine isopeptide (Lys-Gly) (interchain with G-Cter in SUMO1) cross-link involves residue K132. The segment at residues 134–209 is a DNA-binding region (nuclear receptor); the sequence is DELCVVCGDR…MGMLAECLLT (76 aa). An NR C4-type zinc finger spans residues 137 to 157; that stretch reads CVVCGDRASGYHYNALTCEGC. 2 positions are modified to phosphoserine; by PKC/PRKCA: S145 and S164. K167 is modified (N6-acetyllysine; by EP300). The segment at 173–197 adopts an NR C4-type zinc-finger fold; sequence CKNGGNCVMDMYMRRKCQECRLRKC. The residue at position 216 (K216) is an N6-methyllysine; by SETD7. K223 is subject to N6-acetyllysine; by EP300. Positions 229–240 are enriched in basic and acidic residues; the sequence is AIHEDSEGRDLR. The disordered stretch occupies residues 229–253; sequence AIHEDSEGRDLRQVTSTTKSCREKT. The region spanning 258 to 482 is the NR LBD domain; it reads DQQNLLHYIM…PLLCEIWDVQ (225 aa). K285 participates in a covalent cross-link: Glycyl lysine isopeptide (Lys-Gly) (interchain with G-Cter in SUMO1). The chenodeoxycholate site is built by R341, Y371, and Y379. Position 452 is a phosphothreonine; by PKC/PRKCZ (T452). Residue H457 participates in chenodeoxycholate binding.

It belongs to the nuclear hormone receptor family. NR1 subfamily. Heterodimer with RXRA; the heterodimerization enhances the binding affinity for LXXLL motifs from coactivators. Binds DNA predominantly as a heterodimer with RXRA. After activation by agonist binding interacts with coactivators. Interacts with NCOA1, NCOA2, PPARGC1A, CARM1, SETD7, PRMT1, GPS2, SMARCA4 and MED1, EP300 and SMARCD1. Interacts with XRCC5 and XRCC6; decreasing NR1H4/FXR transactivation activity towards ABCB11/BSEP. Interacts with PAGR1 AND NCOA6; indicative for an association with an MLL2/MLL3 complex (ASCOM). Post-translationally, acetylated by EP300. Lys-223 as is the major acetylation site for EP300; the dynamicly regulated acetylation inhibits heterodimerization with RXRA and transactivation activity. Deacetylated by SIRT1. In terms of processing, methylation may increase transactivation of target genes. Phosphorylation by PKC/PRKCA increases transactivation activity by promoting association with PPARGC1A. Post-translationally, sumoylated upon ligand binding.

The protein resides in the nucleus. In terms of biological role, ligand-activated transcription factor. Receptor for bile acids (BAs) such as chenodeoxycholic acid (CDCA), lithocholic acid, deoxycholic acid (DCA) and allocholic acid (ACA). Plays a essential role in BA homeostasis through the regulation of genes involved in BA synthesis, conjugation and enterohepatic circulation. Also regulates lipid and glucose homeostasis and is involved innate immune response. The FXR-RXR heterodimer binds predominantly to farnesoid X receptor response elements (FXREs) containing two inverted repeats of the consensus sequence 5'-AGGTCA-3' in which the monomers are spaced by 1 nucleotide (IR-1) but also to tandem repeat DR1 sites with lower affinity, and can be activated by either FXR or RXR-specific ligands. It is proposed that monomeric nuclear receptors such as NR5A2/LRH-1 bound to coregulatory nuclear responsive element (NRE) halfsites located in close proximity to FXREs modulate transcriptional activity. In the liver activates transcription of the corepressor NR0B2 thereby indirectly inhibiting CYP7A1 and CYP8B1 (involved in BA synthesis) implicating at least in part histone demethylase KDM1A resulting in epigenomic repression, and SLC10A1/NTCP (involved in hepatic uptake of conjugated BAs). Activates transcription of the repressor MAFG (involved in regulation of BA synthesis). Activates transcription of SLC27A5/BACS and BAAT (involved in BA conjugation), ABCB11/BSEP (involved in bile salt export) by directly recruiting histone methyltransferase CARM1, and ABCC2/MRP2 (involved in secretion of conjugated BAs) and ABCB4 (involved in secretion of phosphatidylcholine in the small intestine). Activates transcription of SLC27A5/BACS and BAAT (involved in BA conjugation), ABCB11/BSEP (involved in bile salt export) by directly recruiting histone methyltransferase CARM1, and ABCC2/MRP2 (involved in secretion of conjugated BAs) and ABCB4 (involved in secretion of phosphatidylcholine in the small intestine). In the intestine activates FGF19 expression and secretion leading to hepatic CYP7A1 repression. The function also involves the coordinated induction of hepatic KLB/beta-klotho expression. Regulates transcription of liver UGT2B4 and SULT2A1 involved in BA detoxification; binding to the UGT2B4 promoter seems to imply a monomeric transactivation independent of RXRA. Modulates lipid homeostasis by activating liver NR0B2/SHP-mediated repression of SREBF1 (involved in de novo lipogenesis), expression of PLTP (involved in HDL formation), SCARB1 (involved in HDL hepatic uptake), APOE, APOC1, APOC4, PPARA (involved in beta-oxidation of fatty acids), VLDLR and SDC1 (involved in the hepatic uptake of LDL and IDL remnants), and inhibiting expression of MTTP (involved in VLDL assembly). Increases expression of APOC2 (promoting lipoprotein lipase activity implicated in triglyceride clearance). Transrepresses APOA1 involving a monomeric competition with NR2A1 for binding to a DR1 element. Also reduces triglyceride clearance by inhibiting expression of ANGPTL3 and APOC3 (both involved in inhibition of lipoprotein lipase). Involved in glucose homeostasis by modulating hepatic gluconeogenesis through activation of NR0B2/SHP-mediated repression of respective genes. Modulates glycogen synthesis (inducing phosphorylation of glycogen synthase kinase-3). Modulates glucose-stimulated insulin secretion and is involved in insulin resistance. Involved in intestinal innate immunity. Plays a role in protecting the distal small intestine against bacterial overgrowth and preservation of the epithelial barrier. Down-regulates inflammatory cytokine expression in several types of immune cells including macrophages and mononuclear cells. Mediates trans-repression of TLR4-induced cytokine expression; the function seems to require its sumoylation and prevents N-CoR nuclear receptor corepressor clearance from target genes such as IL1B and NOS2. Involved in the TLR9-mediated protective mechanism in intestinal inflammation. Plays an anti-inflammatory role in liver inflammation; proposed to inhibit pro-inflammatory (but not antiapoptotic) NF-kappa-B signaling. This Bos taurus (Bovine) protein is Bile acid receptor (NR1H4).